Here is a 331-residue protein sequence, read N- to C-terminus: Zinc finger protein 660 (331 aa).

The span at 1–12 (MRRKTRNFKHKT) shows a compositional bias: basic residues. Residues 1 to 35 (MRRKTRNFKHKTVKDNKVLTEGSDQESEKDNSQCC) form a disordered region. Residue Ser23 is modified to Phosphoserine. 10 C2H2-type zinc fingers span residues 50–72 (YVCT…ERIH), 78–100 (YKCK…RRIH), 106–128 (YTCS…QGIH), 134–156 (YECK…HRVH), 162–184 (YSCI…QRMH), 190–212 (YKCK…QRIH), 218–240 (YECD…QRLH), 246–268 (YKCN…QRVH), 274–296 (YKCN…LRTH), and 302–324 (YKCS…QRKH).

It belongs to the krueppel C2H2-type zinc-finger protein family.

The protein localises to the nucleus. Functionally, may be involved in transcriptional regulation. The protein is Zinc finger protein 660 (ZNF660) of Homo sapiens (Human).